Consider the following 182-residue polypeptide: Adenine phosphoribosyltransferase (182 aa).

It belongs to the purine/pyrimidine phosphoribosyltransferase family. Homodimer.

Its subcellular location is the cytoplasm. The enzyme catalyses AMP + diphosphate = 5-phospho-alpha-D-ribose 1-diphosphate + adenine. Its pathway is purine metabolism; AMP biosynthesis via salvage pathway; AMP from adenine: step 1/1. Its function is as follows. Catalyzes a salvage reaction resulting in the formation of AMP, that is energically less costly than de novo synthesis. The protein is Adenine phosphoribosyltransferase of Bordetella avium (strain 197N).